A 289-amino-acid polypeptide reads, in one-letter code: Probable signal peptidase I (289 aa).

Topologically, residues 1 to 53 are cytoplasmic; it reads MTETTDSVPEPPSDADQLQPKVSICGLDMPAEVSETAAEAAIGVSEPKKRSAL. Residues 54 to 74 form a helical membrane-spanning segment; the sequence is WEFAILAVIAIGLYYVMLTFV. Over 75–289 the chain is Extracellular; sequence ARPYLIPSES…VGSVNSQQGQ (215 aa). Catalysis depends on residues serine 84 and lysine 162.

Belongs to the peptidase S26 family.

It localises to the cell membrane. It carries out the reaction Cleavage of hydrophobic, N-terminal signal or leader sequences from secreted and periplasmic proteins.. The chain is Probable signal peptidase I (lepB) from Mycobacterium leprae (strain TN).